A 443-amino-acid chain; its full sequence is Xaa-Pro dipeptidase (443 aa).

Positions 241, 252, 333, 378, and 417 each coordinate Mn(2+).

It belongs to the peptidase M24B family. Bacterial-type prolidase subfamily. The cofactor is Mn(2+).

It catalyses the reaction Xaa-L-Pro dipeptide + H2O = an L-alpha-amino acid + L-proline. Its function is as follows. Splits dipeptides with a prolyl residue in the C-terminal position. The chain is Xaa-Pro dipeptidase from Actinobacillus pleuropneumoniae serotype 5b (strain L20).